The following is a 239-amino-acid chain: Protein GrpE (239 aa).

2 disordered regions span residues 1–60 and 208–239; these read MIEN…SNND and SMGP…SEDV. Polar residues predominate over residues 28 to 42; that stretch reads SMQNSTTENDELSSQ. Composition is skewed to basic and acidic residues over residues 43 to 53 and 216 to 225; these read KTEEINTEELK and SQQEVEKDTV. Acidic residues predominate over residues 226–239; that stretch reads EGDVDSDANTSEDV.

It belongs to the GrpE family. Homodimer.

The protein localises to the cytoplasm. Participates actively in the response to hyperosmotic and heat shock by preventing the aggregation of stress-denatured proteins, in association with DnaK and GrpE. It is the nucleotide exchange factor for DnaK and may function as a thermosensor. Unfolded proteins bind initially to DnaJ; upon interaction with the DnaJ-bound protein, DnaK hydrolyzes its bound ATP, resulting in the formation of a stable complex. GrpE releases ADP from DnaK; ATP binding to DnaK triggers the release of the substrate protein, thus completing the reaction cycle. Several rounds of ATP-dependent interactions between DnaJ, DnaK and GrpE are required for fully efficient folding. The protein is Protein GrpE of Prochlorococcus marinus (strain MIT 9301).